The primary structure comprises 311 residues: 26S proteasome regulatory subunit RPN11 (311 aa).

Residues 32–167 (VYISSLALLK…IDAFRLISPA (136 aa)) form the MPN domain. The Zn(2+) site is built by histidine 114, histidine 116, and aspartate 127. A JAMM motif motif is present at residues 114 to 127 (HSHPGFGCWLSSVD).

Belongs to the peptidase M67A family.

Its function is as follows. Acts as a regulatory subunit of the 26 proteasome which is involved in the ATP-dependent degradation of ubiquitinated proteins. This is 26S proteasome regulatory subunit RPN11 (RPN11) from Eremothecium gossypii (strain ATCC 10895 / CBS 109.51 / FGSC 9923 / NRRL Y-1056) (Yeast).